We begin with the raw amino-acid sequence, 201 residues long: Probable DNA replication complex GINS protein PSF1 (201 aa).

Belongs to the GINS1/PSF1 family. As to quaternary structure, component of the GINS complex which is a heterotetramer of gins1, gins2, gins3 and gins4.

It is found in the nucleus. Its function is as follows. The GINS complex plays an essential role in the initiation of DNA replication. This chain is Probable DNA replication complex GINS protein PSF1, found in Caenorhabditis briggsae.